The sequence spans 608 residues: Auxin response factor 3 (608 aa).

Positions 1 to 40 (MGGLIDLNVMETEEDETQTQTPSSASGSVSPTSSSSASVS) are disordered. The span at 18 to 40 (QTQTPSSASGSVSPTSSSSASVS) shows a compositional bias: low complexity. The segment at residues 159–261 (FCKTLTASDT…KLRLGVRRAS (103 aa)) is a DNA-binding region (TF-B3).

Belongs to the ARF family. Homo and heterodimers. As to expression, expressed in the whole plant.

The protein localises to the nucleus. In terms of biological role, auxin response factors (ARFs) are transcriptional factors that bind specifically to the DNA sequence 5'-TGTCTC-3' found in the auxin-responsive promoter elements (AuxREs). Could act as transcriptional activator or repressor. Formation of heterodimers with Aux/IAA proteins may alter their ability to modulate early auxin response genes expression. Involved in the establishment or elaboration of tissue patterning during gynoecial development. The chain is Auxin response factor 3 (ARF3) from Arabidopsis thaliana (Mouse-ear cress).